A 758-amino-acid polypeptide reads, in one-letter code: Probable C-mannosyltransferase DPY19L2 (758 aa).

Residues 1–58 are disordered; sequence MRKQGVSSKRLQSSGRSQSKGRRGASLAREPEVEEEMEKSALGGGKLPRGSWRSSPGR. The Nuclear portion of the chain corresponds to 1 to 107; sequence MRKQGVSSKR…ELQARRFSSR (107 aa). Positions 7–18 are enriched in low complexity; the sequence is SSKRLQSSGRSQ. Residues 108-128 form a helical membrane-spanning segment; that stretch reads TTLGIAVFVAILHWLHLVTLF. The Perinuclear space segment spans residues 129–194; the sequence is ENDRHFSHLS…INAIKRFHLY (66 aa). Residues 195-215 form a helical membrane-spanning segment; sequence PEVIIASWYCTFMGIMNLFGL. The Nuclear segment spans residues 216–241; that stretch reads ETKTCWNVTRIEPLNEVQSCEGLGDP. The next 2 helical transmembrane spans lie at 242-262 and 263-283; these read ACFYVGVIFILNGLMMGLFFM and YGAYLSGTQLGGLITVLCFFF. The Nuclear segment spans residues 284–296; it reads NHGEATRVMWTPP. A helical membrane pass occupies residues 297–317; sequence LRESFSYPFLVLQMCILTLIL. At 318–343 the chain is on the perinuclear space side; that stretch reads RTSSNDRRPFIALCLSNVAFMLPWQF. The chain crosses the membrane as a helical span at residues 344 to 364; sequence AQFILFTQIASLFPMYVVGYI. At 365-371 the chain is on the nuclear side; it reads EPSKFQK. A helical membrane pass occupies residues 372–392; the sequence is IIYMNMISVTLSFILMFGNSM. Over 393-422 the chain is Perinuclear space; sequence YLSSYYSSSLLMTWAIILKRNEIQKLGVSK. Residues 423–443 traverse the membrane as a helical segment; that stretch reads LNFWLIQGSAWWCGTIILKFL. Residues 444–488 are Nuclear-facing; the sequence is TSKILGVSDHIRLSDLIAARILRYTDFDTLIYTCAPEFDFMEKAT. The helical transmembrane segment at 489-509 threads the bilayer; that stretch reads PLRYTKTLLLPVVMVITCFIF. Over 510–533 the chain is Perinuclear space; it reads KKTVRDISYVLATNIYLRKQLLEH. Residues 534–554 form a helical membrane-spanning segment; the sequence is SELAFHTLQLLVFTALAILIM. At 555–758 the chain is on the nuclear side; it reads RLKMFLTPHM…NSVYRVLKVN (204 aa).

It belongs to the dpy-19 family. As to quaternary structure, interacts with FAM209. Widely expressed with high expression in testis. Not detectable in ejaculated sperm (at protein level).

The protein resides in the nucleus inner membrane. Functionally, probable C-mannosyltransferase that mediates C-mannosylation of tryptophan residues on target proteins. In terms of biological role, required during spermatogenesis for sperm head elongation and acrosome formation. Also plays a role in acrosome attachment to the nuclear envelope. The sequence is that of Probable C-mannosyltransferase DPY19L2 from Homo sapiens (Human).